The sequence spans 307 residues: UPF0276 protein PM0211 (307 aa).

The protein belongs to the UPF0276 family.

This chain is UPF0276 protein PM0211, found in Pasteurella multocida (strain Pm70).